A 188-amino-acid chain; its full sequence is HTH-type transcriptional regulator QacR (188 aa).

The HTH tetR-type domain occupies Met1 to Trp61. Residues Thr24–Phe43 constitute a DNA-binding region (H-T-H motif).

Homodimer. Binds cooperatively to DNA as a pair of dimers.

In terms of biological role, transcriptional repressor of qacA. Binds to IR1, an unusually long 28 bp operator, which is located downstream from the qacA promoter and overlaps its transcription start site. QacR is induced from its IR1 site by binding to one of many structurally dissimilar cationic lipophilic compounds, which are also substrates of QacA. In Staphylococcus aureus (strain Mu50 / ATCC 700699), this protein is HTH-type transcriptional regulator QacR (qacR).